We begin with the raw amino-acid sequence, 261 residues long: Small ribosomal subunit protein mS23 (261 aa).

The segment at 234 to 261 is disordered; sequence NPSESWATDEKDPKKNDDIEEDVEEIKL. Residues 241–250 show a composition bias toward basic and acidic residues; sequence TDEKDPKKND. A compositionally biased stretch (acidic residues) spans 251–261; that stretch reads DIEEDVEEIKL.

Belongs to the mitochondrion-specific ribosomal protein mS23 family. In terms of assembly, component of the mitochondrial small ribosomal subunit.

It localises to the mitochondrion. The protein is Small ribosomal subunit protein mS23 (RSM25) of Vanderwaltozyma polyspora (strain ATCC 22028 / DSM 70294 / BCRC 21397 / CBS 2163 / NBRC 10782 / NRRL Y-8283 / UCD 57-17) (Kluyveromyces polysporus).